Reading from the N-terminus, the 190-residue chain is Holliday junction branch migration complex subunit RuvA (190 aa).

The tract at residues 1–64 (MIGKLTGTLL…EDAQLLYGFG (64 aa)) is domain I. A domain II region spans residues 65–137 (TAQERQAFRE…LKGKLGADVG (73 aa)). The interval 137 to 141 (GVRAH) is flexible linker. The domain III stretch occupies residues 142–190 (AANDNQADILQALLALGYNDKEAAAALKALPADVGVSEGIKLALKSLSK).

It belongs to the RuvA family. As to quaternary structure, homotetramer. Forms an RuvA(8)-RuvB(12)-Holliday junction (HJ) complex. HJ DNA is sandwiched between 2 RuvA tetramers; dsDNA enters through RuvA and exits via RuvB. An RuvB hexamer assembles on each DNA strand where it exits the tetramer. Each RuvB hexamer is contacted by two RuvA subunits (via domain III) on 2 adjacent RuvB subunits; this complex drives branch migration. In the full resolvosome a probable DNA-RuvA(4)-RuvB(12)-RuvC(2) complex forms which resolves the HJ.

It localises to the cytoplasm. Its function is as follows. The RuvA-RuvB-RuvC complex processes Holliday junction (HJ) DNA during genetic recombination and DNA repair, while the RuvA-RuvB complex plays an important role in the rescue of blocked DNA replication forks via replication fork reversal (RFR). RuvA specifically binds to HJ cruciform DNA, conferring on it an open structure. The RuvB hexamer acts as an ATP-dependent pump, pulling dsDNA into and through the RuvAB complex. HJ branch migration allows RuvC to scan DNA until it finds its consensus sequence, where it cleaves and resolves the cruciform DNA. In Acidovorax ebreus (strain TPSY) (Diaphorobacter sp. (strain TPSY)), this protein is Holliday junction branch migration complex subunit RuvA.